The sequence spans 150 residues: Putative ribosome maturation factor RimP (150 aa).

It belongs to the RimP family.

The protein localises to the cytoplasm. Functionally, required for maturation of 30S ribosomal subunits. This Mycobacterium leprae (strain TN) protein is Putative ribosome maturation factor RimP.